The sequence spans 343 residues: Isopentenyl-diphosphate delta-isomerase (343 aa).

9–10 serves as a coordination point for substrate; the sequence is RK. Residues serine 67, 68–70, serine 98, and asparagine 127 each bind FMN; that span reads AMT. 98 to 100 contributes to the substrate binding site; sequence SQR. Glutamine 162 serves as a coordination point for substrate. Glutamate 163 contacts Mg(2+). Residues lysine 194, threonine 224, 273–275, and 294–295 each bind FMN; these read GVR and AA.

The protein belongs to the IPP isomerase type 2 family. Homooctamer. Dimer of tetramers. The cofactor is FMN. Requires NADPH as cofactor. Mg(2+) serves as cofactor.

The protein resides in the cytoplasm. It catalyses the reaction isopentenyl diphosphate = dimethylallyl diphosphate. Its function is as follows. Involved in the biosynthesis of isoprenoids. Catalyzes the 1,3-allylic rearrangement of the homoallylic substrate isopentenyl (IPP) to its allylic isomer, dimethylallyl diphosphate (DMAPP). The protein is Isopentenyl-diphosphate delta-isomerase of Xanthobacter autotrophicus (strain ATCC BAA-1158 / Py2).